The primary structure comprises 344 residues: Lipase chaperone (344 aa).

Residues Ala14–Ala34 form a helical membrane-spanning segment.

This sequence belongs to the lipase chaperone family.

Its subcellular location is the cell inner membrane. Its function is as follows. May be involved in the folding of the extracellular lipase during its passage through the periplasm. This Burkholderia cepacia (Pseudomonas cepacia) protein is Lipase chaperone (lifO).